Here is a 314-residue protein sequence, read N- to C-terminus: 3'-5' exoribonuclease YhaM (314 aa).

Residues 163–279 (HVVSMLDLAK…LHYIDNLDAK (117 aa)) form the HD domain.

Belongs to the YhaM family.

Its function is as follows. Shows a 3'-5' exoribonuclease activity. The polypeptide is 3'-5' exoribonuclease YhaM (Bacillus mycoides (strain KBAB4) (Bacillus weihenstephanensis)).